The following is a 123-amino-acid chain: Small ribosomal subunit protein uS12c (123 aa).

This sequence belongs to the universal ribosomal protein uS12 family. In terms of assembly, part of the 30S ribosomal subunit.

It localises to the plastid. The protein localises to the chloroplast. Its function is as follows. With S4 and S5 plays an important role in translational accuracy. Located at the interface of the 30S and 50S subunits. The polypeptide is Small ribosomal subunit protein uS12c (rps12) (Huperzia lucidula (Shining clubmoss)).